Consider the following 149-residue polypeptide: Large ribosomal subunit protein bL9 (149 aa).

Belongs to the bacterial ribosomal protein bL9 family.

Its function is as follows. Binds to the 23S rRNA. This chain is Large ribosomal subunit protein bL9, found in Rubrobacter xylanophilus (strain DSM 9941 / JCM 11954 / NBRC 16129 / PRD-1).